The chain runs to 293 residues: Ribosomal RNA small subunit methyltransferase H (293 aa).

S-adenosyl-L-methionine contacts are provided by residues 32-34 (GGH), D51, F78, D99, and Q106. The disordered stretch occupies residues 274-293 (DEIRENPASRSAKMRVARRL).

Belongs to the methyltransferase superfamily. RsmH family.

The protein resides in the cytoplasm. The catalysed reaction is cytidine(1402) in 16S rRNA + S-adenosyl-L-methionine = N(4)-methylcytidine(1402) in 16S rRNA + S-adenosyl-L-homocysteine + H(+). Its function is as follows. Specifically methylates the N4 position of cytidine in position 1402 (C1402) of 16S rRNA. This Sulfurihydrogenibium azorense (strain DSM 15241 / OCM 825 / Az-Fu1) protein is Ribosomal RNA small subunit methyltransferase H.